The primary structure comprises 169 residues: 2-C-methyl-D-erythritol 2,4-cyclodiphosphate synthase (169 aa).

A divalent metal cation contacts are provided by aspartate 13 and histidine 15. Residues 13-15 (DIH) and 40-41 (HS) each bind 4-CDP-2-C-methyl-D-erythritol 2-phosphate. An a divalent metal cation-binding site is contributed by histidine 48. 4-CDP-2-C-methyl-D-erythritol 2-phosphate contacts are provided by residues 62–64 (DIG), 138–141 (TTNE), and arginine 148.

Belongs to the IspF family. As to quaternary structure, homotrimer. The cofactor is a divalent metal cation.

It catalyses the reaction 4-CDP-2-C-methyl-D-erythritol 2-phosphate = 2-C-methyl-D-erythritol 2,4-cyclic diphosphate + CMP. It participates in isoprenoid biosynthesis; isopentenyl diphosphate biosynthesis via DXP pathway; isopentenyl diphosphate from 1-deoxy-D-xylulose 5-phosphate: step 4/6. In terms of biological role, involved in the biosynthesis of isopentenyl diphosphate (IPP) and dimethylallyl diphosphate (DMAPP), two major building blocks of isoprenoid compounds. Catalyzes the conversion of 4-diphosphocytidyl-2-C-methyl-D-erythritol 2-phosphate (CDP-ME2P) to 2-C-methyl-D-erythritol 2,4-cyclodiphosphate (ME-CPP) with a corresponding release of cytidine 5-monophosphate (CMP). This chain is 2-C-methyl-D-erythritol 2,4-cyclodiphosphate synthase, found in Akkermansia muciniphila (strain ATCC BAA-835 / DSM 22959 / JCM 33894 / BCRC 81048 / CCUG 64013 / CIP 107961 / Muc).